The sequence spans 269 residues: WW domain-binding protein 1 (269 aa).

2 short sequence motifs (PPxY motif) span residues 124–127 and 137–141; these read PPAY and PPPPY. 2 disordered regions span residues 169–203 and 249–269; these read EGTN…PPSC and PPES…GDIP. Positions 174–183 are enriched in polar residues; that stretch reads EGVSSHQSAP.

In terms of assembly, interacts with NEDD4. Binds to the WW domain of YAP1, WWP1 and WWP2. Interacts with WWOX. In terms of tissue distribution, expressed in most tissues but at significantly lower levels in placenta, lung, liver, and kidney.

The protein is WW domain-binding protein 1 (WBP1) of Homo sapiens (Human).